Consider the following 317-residue polypeptide: MNVVNTLQIIVANMLIYSTPLIFTSIGGVFSERGGIVNVGLEGIMTIGAFSSVVFNLTTAGMFGSMTPWLSILFGALIGALFSSLHAVATVNLRADHIVSGTVLNLMAPALGVFLLQVFYQQGQININEQIGYWNVPLLSNIPVIGKIFFTQTSLPGFLAIVVAILAWYVLFKTRFGLRLRSVGENPQAADTLGINVYAYRWAGVLLSGVLGGVGGAIYAQAISGNFSVSTIAGQGFISLAAMIFGKWNPIGAMLSSLLFGLFTSLAVVGGQIPGIKEIPSSFLQMAPYVFTIIVLALFLGKAIAPKADGVNYIKSK.

The next 10 membrane-spanning stretches (helical) occupy residues 9–29, 35–55, 62–82, 98–118, 132–151, 155–172, 203–223, 225–245, 251–271, and 286–306; these read IIVA…IGGV, GIVN…SVVF, MFGS…GALF, IVSG…LLQV, GYWN…IFFT, LPGF…YVLF, AGVL…AQAI, GNFS…AMIF, IGAM…VVGG, and MAPY…AIAP.

It belongs to the binding-protein-dependent transport system permease family. As to quaternary structure, the complex is composed of two ATP-binding proteins (NupA), two transmembrane proteins (NupB and NupC) and a solute-binding protein (BmpA).

It is found in the cell membrane. In terms of biological role, part of an ABC transporter complex involved in the uptake of all common nucleosides. Responsible for the translocation of the substrate across the membrane. The chain is Nucleoside ABC transporter permease protein NupC from Lactococcus lactis subsp. cremoris (strain MG1363).